The following is a 543-amino-acid chain: Ipecoside beta-D-glucosidase IpeGLU1 (543 aa).

A beta-D-glucoside contacts are provided by residues Gln36, His140, 185–186 (NE), Tyr350, Glu422, Trp471, and Phe487. Catalysis depends on Glu186, which acts as the Proton donor. Glu422 acts as the Nucleophile in catalysis.

It belongs to the glycosyl hydrolase 1 family. In terms of tissue distribution, expressed in roots.

Its subcellular location is the cytoplasm. It localises to the cytosol. The enzyme catalyses deacetylipecoside + H2O = deacetylipecoside aglycone + D-glucose. It catalyses the reaction deacetylisoipecoside + H2O = deacetylisoipecoside aglycone + D-glucose. The catalysed reaction is 6-O-methyldeacetylipecoside + H2O = 6-O-methyldeacetylipecoside aglycone + D-glucose. It carries out the reaction 6-O-methyldeacetylisoipecoside + H2O = 6-O-methyldeacetylisoipecoside aglycone + D-glucose. The enzyme catalyses ipecoside + H2O = ipecoside aglycone + D-glucose. It catalyses the reaction 3alpha(S)-strictosidine + H2O = strictosidine aglycone + D-glucose. It participates in alkaloid biosynthesis. With respect to regulation, inhibited by Cu(2+), Fe(2+) and Zn(2+). Functionally, beta-glucosidase involved in the biosynthesis of ipecac and benzylisoquinoline monoterpenoid-isoquinoline alkaloids natural products, starting by the condensation of dopamine and secologanin, and including emetine and cephaeline, drugs used both as anti-protozoal (e.g. treatment of ameobiasis) and as emetic agents. In response to pathogen and herbivore attack, triggers the release of toxic ipecoside aglycon to trigger defense responses. Catalyzes deglucosylation both on (1S)-diastereomer and (1R)-diastereomer substrates, including ipecoside, the main alkaloidal glucoside. Also active on N-deacetylisoipecoside, 6-O-methyl-N-deacetylisoipecoside, 6-O-methyl-N-deacetylipecoside and N-deacetylipecoside. This Carapichea ipecacuanha (Ipecac) protein is Ipecoside beta-D-glucosidase IpeGLU1.